Consider the following 161-residue polypeptide: Regulator of ribonuclease activity A (161 aa).

This sequence belongs to the RraA family. In terms of assembly, homotrimer. Binds to both RNA-binding sites in the C-terminal region of Rne and to RhlB.

It is found in the cytoplasm. Globally modulates RNA abundance by binding to RNase E (Rne) and regulating its endonucleolytic activity. Can modulate Rne action in a substrate-dependent manner by altering the composition of the degradosome. Modulates RNA-binding and helicase activities of the degradosome. The protein is Regulator of ribonuclease activity A of Pseudoalteromonas atlantica (strain T6c / ATCC BAA-1087).